Reading from the N-terminus, the 279-residue chain is Putative F-box protein At1g50880 (279 aa).

An F-box domain is found at 19–69 (SSSMSSIPLDVTSKILAKLPAKSVLRARCVSKQWSSISTDPYFISNMFPKQ).

This chain is Putative F-box protein At1g50880, found in Arabidopsis thaliana (Mouse-ear cress).